The sequence spans 81 residues: ATP synthase subunit c (81 aa).

The next 2 helical transmembrane spans lie at 7-27 (AASV…PGIG) and 57-77 (LAFM…LLFA).

This sequence belongs to the ATPase C chain family. F-type ATPases have 2 components, F(1) - the catalytic core - and F(0) - the membrane proton channel. F(1) has five subunits: alpha(3), beta(3), gamma(1), delta(1), epsilon(1). F(0) has four main subunits: a(1), b(1), b'(1) and c(10-14). The alpha and beta chains form an alternating ring which encloses part of the gamma chain. F(1) is attached to F(0) by a central stalk formed by the gamma and epsilon chains, while a peripheral stalk is formed by the delta, b and b' chains.

The protein localises to the cellular thylakoid membrane. Functionally, f(1)F(0) ATP synthase produces ATP from ADP in the presence of a proton or sodium gradient. F-type ATPases consist of two structural domains, F(1) containing the extramembraneous catalytic core and F(0) containing the membrane proton channel, linked together by a central stalk and a peripheral stalk. During catalysis, ATP synthesis in the catalytic domain of F(1) is coupled via a rotary mechanism of the central stalk subunits to proton translocation. Its function is as follows. Key component of the F(0) channel; it plays a direct role in translocation across the membrane. A homomeric c-ring of between 10-14 subunits forms the central stalk rotor element with the F(1) delta and epsilon subunits. The chain is ATP synthase subunit c from Synechococcus sp. (strain CC9311).